Reading from the N-terminus, the 143-residue chain is Transcriptional regulator MraZ (143 aa).

2 SpoVT-AbrB domains span residues 5 to 47 (EYSH…PMPV) and 76 to 119 (AMEA…SDEN).

Belongs to the MraZ family. As to quaternary structure, forms oligomers.

The protein localises to the cytoplasm. It localises to the nucleoid. The sequence is that of Transcriptional regulator MraZ from Leuconostoc citreum (strain KM20).